The chain runs to 282 residues: MASLGQIIFWSIINVIIILAGAIVLIIGFGISGKHFITVTTFTSAGNIGEDGTLSCTFEPDIKLNGIVIQWLKEGIKGLVHEFKEGKDDLSQQHEMFRGRTAVFADQVVVGNASLRLKNVQLTDAGTYTCYIHTSKGKGNANLEYKTGAFSMPEINVDYNASSESLRCEAPRWFPQPTVAWASQVDQGANFSEVSNTSFELNSENVTMKVVSVLYNVTINNTYSCMIENDIAKATGDIKVTDSEVKRRSQLELLNSGPSPCVSSVSAAGWALLSLSCCLMLR.

An N-terminal signal peptide occupies residues 1-24; the sequence is MASLGQIIFWSIINVIIILAGAIV. 2 consecutive Ig-like V-type domains span residues 35 to 144 and 153 to 241; these read HFIT…ANLE and PEIN…IKVT. Intrachain disulfides connect cysteine 56–cysteine 130 and cysteine 168–cysteine 225. Asparagine 216 carries an N-linked (GlcNAc...) asparagine glycan. Residue glycine 257 is the site of GPI-anchor amidated glycine attachment. Positions 258–282 are cleaved as a propeptide — removed in mature form; sequence PSPCVSSVSAAGWALLSLSCCLMLR.

Belongs to the immunoglobulin superfamily. BTN/MOG family. N-glycosylated.

Its subcellular location is the cell membrane. In terms of biological role, negatively regulates T-cell-mediated immune response by inhibiting T-cell activation, proliferation, cytokine production and development of cytotoxicity. When expressed on the cell surface of tumor macrophages, plays an important role, together with regulatory T-cells (Treg), in the suppression of tumor-associated antigen-specific T-cell immunity. Involved in promoting epithelial cell transformation. This chain is V-set domain-containing T-cell activation inhibitor 1, found in Rattus norvegicus (Rat).